Consider the following 200-residue polypeptide: dTTP/UTP pyrophosphatase (200 aa).

The active-site Proton acceptor is the aspartate 76.

This sequence belongs to the Maf family. YhdE subfamily. Requires a divalent metal cation as cofactor.

It is found in the cytoplasm. The enzyme catalyses dTTP + H2O = dTMP + diphosphate + H(+). The catalysed reaction is UTP + H2O = UMP + diphosphate + H(+). Functionally, nucleoside triphosphate pyrophosphatase that hydrolyzes dTTP and UTP. May have a dual role in cell division arrest and in preventing the incorporation of modified nucleotides into cellular nucleic acids. This Acetivibrio thermocellus (strain ATCC 27405 / DSM 1237 / JCM 9322 / NBRC 103400 / NCIMB 10682 / NRRL B-4536 / VPI 7372) (Clostridium thermocellum) protein is dTTP/UTP pyrophosphatase.